The primary structure comprises 340 residues: Sesquiterpene synthase 6 (340 aa).

The Mg(2+) site is built by D90, N229, S233, and E237. Positions 90-94 (DDITD) match the DDXXD motif motif. Positions 229–237 (NDIYSFNNE) match the NSE/DTE motif motif. (2E,6E)-farnesyl diphosphate-binding residues include R316 and Y317.

The protein belongs to the terpene synthase family. Requires Mg(2+) as cofactor.

It catalyses the reaction (2E,6E)-farnesyl diphosphate = delta-cadinene + diphosphate. The catalysed reaction is (2E,6E)-farnesyl diphosphate = bicyclogermacrene + diphosphate. Terpene cyclase that catalyzes the cyclization of farnesyl diphosphate (FPP) to various sesquiterpenes, including bicycloelemene, alpha-gurjunene, 9-epi-caryophylene, bicyclosesquiphellandrene, bicyclogermacrene and delta-cadinene. This Postia placenta (strain ATCC 44394 / Madison 698-R) (Brown rot fungus) protein is Sesquiterpene synthase 6.